Reading from the N-terminus, the 480-residue chain is Caspase-8 (480 aa).

Residues 1–218 constitute a propeptide that is removed on maturation; sequence MDFQSCLYAI…ELCDSPREQD (218 aa). 2 consecutive DED domains span residues 3–80 and 101–177; these read FQSC…NFLD and YRVM…KIED. Phosphoserine is present on residues serine 188 and serine 213. Position 226 is an N6-acetyllysine (lysine 226). Histidine 319 is a catalytic residue. Phosphotyrosine is present on tyrosine 336. Cysteine 362 is an active-site residue. Positions 377 to 387 are excised as a propeptide; sequence FEQQNHTLEVD. Serine 389 is modified (phosphoserine; by CDK1).

It belongs to the peptidase C14A family. As to quaternary structure, heterotetramer that consists of two anti-parallel arranged heterodimers, each one formed by a 18 kDa (p18) and a 10 kDa (p10) subunit. Component of the death-induced signaling complex (DISC) composed of cell surface receptor FAS/CD95 or TNFRSF1A, adapter protein FADD and the CASP8 protease; recruitment of CASP8 to the complex is required for processing of CASP8 into the p18 and p10 subunits. Component of the AIM2 PANoptosome complex, a multiprotein complex that drives inflammatory cell death (PANoptosis). Interacts with CFLAR and PEA15. Interacts with RFFL and RNF34; negatively regulate CASP8 through proteasomal degradation. Interacts with TNFAIP8L2. Interacts with CASP8AP2. Interacts with NOL3; decreases CASP8 activity in a mitochondria localization- and phosphorylation-dependent manner and this interaction is dissociated by calcium. Interacts with UBR2. Interacts with RIPK1. Interacts with stimulated TNFRSF10B; this interaction is followed by CASP8 proteolytic cleavage and activation. Post-translationally, generation of the subunits requires association with the death-inducing signaling complex (DISC), whereas additional processing is likely due to the autocatalytic activity of the activated protease. GZMB and CASP10 can be involved in these processing events. (Microbial infection) Proteolytically cleaved by the cowpox virus CRMA death inhibitory protein. In terms of processing, phosphorylation on Ser-389 during mitosis by CDK1 inhibits activation by proteolysis and prevents apoptosis. This phosphorylation occurs in cancer cell lines, as well as in primary breast tissues and lymphocytes. Expressed in a wide variety of tissues. Highest expression in spleen, thymus, lung, liver and kidney. Lower expression in heart, brain, testis and skeletal muscle.

The protein resides in the cytoplasm. It is found in the nucleus. It carries out the reaction Strict requirement for Asp at position P1 and has a preferred cleavage sequence of (Leu/Asp/Val)-Glu-Thr-Asp-|-(Gly/Ser/Ala).. CASP8 activity is restricted by RIPK1. Its activity is regulated as follows. (Microbial infection) Inhibited by baculovirus p35 protein P35. Its function is as follows. Thiol protease that plays a key role in programmed cell death by acting as a molecular switch for apoptosis, necroptosis and pyroptosis, and is required to prevent tissue damage during embryonic development and adulthood. Initiator protease that induces extrinsic apoptosis by mediating cleavage and activation of effector caspases responsible for FAS/CD95-mediated and TNFRSF1A-induced cell death. Cleaves and activates effector caspases CASP3, CASP4, CASP6, CASP7, CASP9 and CASP10. Binding to the adapter molecule FADD recruits it to either receptor FAS/CD95 or TNFRSF1A. The resulting aggregate called the death-inducing signaling complex (DISC) performs CASP8 proteolytic activation. The active dimeric enzyme is then liberated from the DISC and free to activate downstream apoptotic proteases. Proteolytic fragments of the N-terminal propeptide (termed CAP3, CAP5 and CAP6) are likely retained in the DISC. In addition to extrinsic apoptosis, also acts as a negative regulator of necroptosis: acts by cleaving RIPK1 at 'Asp-325', which is crucial to inhibit RIPK1 kinase activity, limiting TNF-induced apoptosis, necroptosis and inflammatory response. Also able to initiate pyroptosis by mediating cleavage and activation of gasdermin-C and -D (GSDMC and GSDMD, respectively): gasdermin cleavage promotes release of the N-terminal moiety that binds to membranes and forms pores, triggering pyroptosis. Initiates pyroptosis following inactivation of MAP3K7/TAK1. Also acts as a regulator of innate immunity by mediating cleavage and inactivation of N4BP1 downstream of TLR3 or TLR4, thereby promoting cytokine production. May participate in the Granzyme B (GZMB) cell death pathways. Cleaves PARP1 and PARP2. In Mus musculus (Mouse), this protein is Caspase-8.